We begin with the raw amino-acid sequence, 1088 residues long: RNA-directed RNA polymerase (1088 aa).

Residues 501 to 687 (LSYGDVTRFL…AKRYIAGGKI (187 aa)) enclose the RdRp catalytic domain.

Belongs to the reoviridae RNA-directed RNA polymerase family. As to quaternary structure, interacts with VP3 (Potential). Interacts with VP2; this interaction activates VP1. Interacts with NSP5; this interaction is probably necessary for the formation of functional virus factories. Interacts with NSP2; this interaction is weak. Requires Mg(2+) as cofactor.

Its subcellular location is the virion. The enzyme catalyses RNA(n) + a ribonucleoside 5'-triphosphate = RNA(n+1) + diphosphate. RNA-directed RNA polymerase that is involved in both transcription and genome replication. Together with VP3 capping enzyme, forms an enzyme complex positioned near the channels situated at each of the five-fold vertices of the core. Following infection, the outermost layer of the virus is lost, leaving a double-layered particle (DLP) made up of the core and VP6 shell. VP1 then catalyzes the transcription of fully conservative plus-strand genomic RNAs that are extruded through the DLP's channels into the cytoplasm where they function as mRNAs for translation of viral proteins. One copy of each of the viral (+)RNAs is also recruited during core assembly, together with newly synthesized polymerase complexes and VP2. The polymerase of these novo-formed particles catalyzes the synthesis of complementary minus-strands leading to dsRNA formation. To do so, the polymerase specifically recognizes and binds 4 bases 5'-UGUG-3' in the conserved 3'-sequence of plus-strand RNA templates. VP2 presumably activates the autoinhibited VP1-RNA complex to coordinate packaging and genome replication. Once dsRNA synthesis is complete, the polymerase switches to the transcriptional mode, thus providing secondary transcription. In Homo sapiens (Human), this protein is RNA-directed RNA polymerase.